A 197-amino-acid polypeptide reads, in one-letter code: MAALGEPVRLERDICRAIELLEKLQRSGEVPPQKLQALQRVLQSEFCNAVREVYEHVYETVDISSSPEVRANATAKATVAAFAASEGHSHPRVVELPKTEEGLGFNIMGGKEQNSPIYISRIIPGGIADRHGGLKRGDQLLSVNGVSVEGEHHEKAVELLKAAQGKVKLVVRYTPKVLEEMESRFEKMRSAKRRQQT.

A2 carries the N-acetylalanine modification. A Kinase interacting site motif is present at residues 2–13 (AALGEPVRLERD). Residues 10–65 (LERDICRAIELLEKLQRSGEVPPQKLQALQRVLQSEFCNAVREVYEHVYETVDISS) enclose the L27 domain. Positions 93-175 (VVELPKTEEG…KVKLVVRYTP (83 aa)) constitute a PDZ domain.

This sequence belongs to the lin-7 family. In terms of assembly, forms a complex with CASK and APBA1 or CASKIN1. Component of the brain-specific heterotrimeric complex (LIN-10-LIN-2-LIN-7 complex) composed of at least APBA1, CASK, and LIN7, which associates with the motor protein KIF17 to transport vesicles along microtubules. Can also interact with other modular proteins containing protein-protein interaction domains like PALS1, PALS2, MPP7, DLG1, DLG2 and DLG3 through its L27 domain. Interacts with DLG4 and GRIN2B as well as CDH1 and CTNNB1, the channels KCNJ12/Kir2.2, KCNJ4/Kir2.3 and probably KCNJ2/Kir2.1 and SLC6A12/BGT-1 via its PDZ domain. The association of LIN7A with cadherin and beta-catenin is calcium-dependent, occurs at synaptic junctions and requires the actin cytoskeleton. Interacts with EGFR, ERBB2, ERBB3 and ERBB4 with both PDZ and KID domains. Associates with KIF17 via APBA1. Interacts with HTR4. Forms a tripartite complex composed of DLG1, MPP7 and LIN7 (LIN7A or LIN7C). Interacts with MAPK12.

Its subcellular location is the cell membrane. It is found in the basolateral cell membrane. It localises to the cell junction. The protein resides in the postsynaptic density membrane. The protein localises to the tight junction. Its subcellular location is the synapse. It is found in the synaptosome. Its function is as follows. Plays a role in establishing and maintaining the asymmetric distribution of channels and receptors at the plasma membrane of polarized cells. Forms membrane-associated multiprotein complexes that may regulate delivery and recycling of proteins to the correct membrane domains. The tripartite complex composed of LIN7 (LIN7A, LIN7B or LIN7C), CASK and APBA1 associates with the motor protein KIF17 to transport vesicles containing N-methyl-D-aspartate (NMDA) receptor subunit NR2B along microtubules. This complex may have the potential to couple synaptic vesicle exocytosis to cell adhesion in brain. Ensures the proper localization of GRIN2B (subunit 2B of the NMDA receptor) to neuronal postsynaptic density and may function in localizing synaptic vesicles at synapses where it is recruited by beta-catenin and cadherin. Required to localize Kir2 channels, GABA transporter (SLC6A12) and EGFR/ERBB1, ERBB2, ERBB3 and ERBB4 to the basolateral membrane of epithelial cells. In Bos taurus (Bovine), this protein is Protein lin-7 homolog C (LIN7C).